Consider the following 443-residue polypeptide: Chromosomal replication initiator protein DnaA (443 aa).

The interval 1 to 67 (MDAWSRSLER…RELLAHFAGF (67 aa)) is domain I, interacts with DnaA modulators. The segment at 67 to 105 (FSDVFLEIGSRPRPVEAQNAPVSTPSAHVSSEPQVPFAG) is domain II. The tract at residues 106–323 (NLDNHYTFAN…GALNTLTARA (218 aa)) is domain III, AAA+ region. Residues G151, G153, K154, and T155 each contribute to the ATP site. Residues 324-443 (NFTGRAITTE…WDKLIRKLSE (120 aa)) are domain IV, binds dsDNA.

It belongs to the DnaA family. In terms of assembly, oligomerizes as a right-handed, spiral filament on DNA at oriC.

Its subcellular location is the cytoplasm. Its function is as follows. Plays an essential role in the initiation and regulation of chromosomal replication. ATP-DnaA binds to the origin of replication (oriC) to initiate formation of the DNA replication initiation complex once per cell cycle. Binds the DnaA box (a 9 base pair repeat at the origin) and separates the double-stranded (ds)DNA. Forms a right-handed helical filament on oriC DNA; dsDNA binds to the exterior of the filament while single-stranded (ss)DNA is stabiized in the filament's interior. The ATP-DnaA-oriC complex binds and stabilizes one strand of the AT-rich DNA unwinding element (DUE), permitting loading of DNA polymerase. After initiation quickly degrades to an ADP-DnaA complex that is not apt for DNA replication. Binds acidic phospholipids. This chain is Chromosomal replication initiator protein DnaA, found in Stenotrophomonas maltophilia (strain K279a).